The chain runs to 142 residues: Large ribosomal subunit protein uL11 (142 aa).

Belongs to the universal ribosomal protein uL11 family. In terms of assembly, part of the ribosomal stalk of the 50S ribosomal subunit. Interacts with L10 and the large rRNA to form the base of the stalk. L10 forms an elongated spine to which L12 dimers bind in a sequential fashion forming a multimeric L10(L12)X complex. In terms of processing, one or more lysine residues are methylated.

Its function is as follows. Forms part of the ribosomal stalk which helps the ribosome interact with GTP-bound translation factors. This Bradyrhizobium diazoefficiens (strain JCM 10833 / BCRC 13528 / IAM 13628 / NBRC 14792 / USDA 110) protein is Large ribosomal subunit protein uL11.